The primary structure comprises 265 residues: MKSIFFSLSLLLLLEKKAAGIELYAGGTKGHFLVKTSPLMFIGKNQFLYGHKEEQEEAPEESIFVQTKHHEYGQDADADMGGALSSQELTSLKEDIVCEEEDELAQQKSQLPSQSQIKSQTQVKSYAAQLKSQPGQLKTIGQVKSQTMLKSHGAPLKSFKARLNLREDIPQQVKGRGYGLAEDLAQVRQQPAKVHRLKGKHRQSRKTAAFYPQFRRRSRPYPRYFVQFQEQLQGSVHHTKSFYPGPGMCYCPRGGVILYQDAFTD.

The N-terminal stretch at 1–20 (MKSIFFSLSLLLLLEKKAAG) is a signal peptide. 5 tandem repeats follow at residues 116-119 (QIKS), 122-125 (QVKS), 129-132 (QLKS), 136-139 (QLKT), and 142-145 (QVKS). A 5 X 4 AA tandem repeats of Q-X-K-[ST] region spans residues 116 to 145 (QIKSQTQVKSYAAQLKSQPGQLKTIGQVKS).

Post-translationally, glycosylated. Covalently cross-linked by transglutaminase, which is important for the formation of the gelatinous copulatory plug. Five repeats of Q-X-K-(S/T) in the central region of the protein serve as the transglutaminase substrate site(s). As to expression, highly expressed in the seminal vesicle where it is detected in luminal epithelium of the mucosa folds, and also in luminal fluid (at protein level). Not detected in other tissues tested.

The protein resides in the secreted. In terms of biological role, component of the copulatory plug. In Mus musculus (Mouse), this protein is Seminal vesicle secretory protein 3A.